Reading from the N-terminus, the 141-residue chain is Hemoglobin subunit alpha (141 aa).

The Globin domain occupies 1 to 141 (VLSASDKTNL…VSTVLTSKYR (141 aa)). Ser3 is modified (phosphoserine). At Lys7 the chain carries N6-succinyllysine. Phosphothreonine is present on Thr8. N6-succinyllysine is present on Lys11. The residue at position 16 (Lys16) is an N6-acetyllysine; alternate. Lys16 carries the N6-succinyllysine; alternate modification. Position 24 is a phosphotyrosine (Tyr24). At Ser35 the chain carries Phosphoserine. Lys40 bears the N6-succinyllysine mark. The residue at position 49 (Ser49) is a Phosphoserine. His58 is a binding site for O2. His87 lines the heme b pocket. Ser102 bears the Phosphoserine mark. Thr108 is modified (phosphothreonine). Ser124 is subject to Phosphoserine. 2 positions are modified to phosphothreonine: Thr134 and Thr137. The residue at position 138 (Ser138) is a Phosphoserine.

This sequence belongs to the globin family. Heterotetramer of two alpha chains and two beta chains. In terms of tissue distribution, red blood cells.

Its function is as follows. Involved in oxygen transport from the lung to the various peripheral tissues. The protein is Hemoglobin subunit alpha of Blarina brevicauda (Northern short-tailed shrew).